Here is a 352-residue protein sequence, read N- to C-terminus: Histidinol-phosphate aminotransferase 1 (352 aa).

Lys211 carries the post-translational modification N6-(pyridoxal phosphate)lysine.

Belongs to the class-II pyridoxal-phosphate-dependent aminotransferase family. Histidinol-phosphate aminotransferase subfamily. Homodimer. The cofactor is pyridoxal 5'-phosphate.

It catalyses the reaction L-histidinol phosphate + 2-oxoglutarate = 3-(imidazol-4-yl)-2-oxopropyl phosphate + L-glutamate. It participates in amino-acid biosynthesis; L-histidine biosynthesis; L-histidine from 5-phospho-alpha-D-ribose 1-diphosphate: step 7/9. The chain is Histidinol-phosphate aminotransferase 1 from Haemophilus influenzae (strain 86-028NP).